Here is a 340-residue protein sequence, read N- to C-terminus: MIFIDACLKKKTPYTPVWMMRQAGRYLPEYMKVRNEVGGFLELCKNYKKASEVTIQPVEILGVDAAILFSDILVIPLEMGMDLHFIKGEGPIFESPVKNENDLAKLSLQKAVKNLQYVYDTISLTREKLPKDKALIGFCGAPWTIATYMIEGKGSKTYSVCKKLLYTNPEFLHKILTLITETLKLYLENQIKSGVNTVQIFDSWASALECEAFFEFSWKYIIEICDFIKAKYPQIPIIVFPKGISGYLDKIYGNFDVFGVDWSTPLESASKILSAKYTLQGNMEPCRLYNKNAIKESVEQILNTMKGKPHIFNLGHGILPDIPVENAKYFIRLVQERSSL.

Substrate-binding positions include 21-25 (RQAGR), aspartate 71, tyrosine 148, serine 203, and histidine 316.

The protein belongs to the uroporphyrinogen decarboxylase family. In terms of assembly, homodimer.

Its subcellular location is the cytoplasm. It carries out the reaction uroporphyrinogen III + 4 H(+) = coproporphyrinogen III + 4 CO2. The protein operates within porphyrin-containing compound metabolism; protoporphyrin-IX biosynthesis; coproporphyrinogen-III from 5-aminolevulinate: step 4/4. Catalyzes the decarboxylation of four acetate groups of uroporphyrinogen-III to yield coproporphyrinogen-III. This chain is Uroporphyrinogen decarboxylase, found in Campylobacter hominis (strain ATCC BAA-381 / DSM 21671 / CCUG 45161 / LMG 19568 / NCTC 13146 / CH001A).